The chain runs to 170 residues: Type IV pilus assembly protein C (170 aa).

Positions 1-23 (MKSKLPLILINLSLISSPLGANA) are cleaved as a signal peptide. A disordered region spans residues 87–107 (KTVSKPAKSNTPPQQAPVNNS). A compositionally biased stretch (polar residues) spans 93–107 (AKSNTPPQQAPVNNS). Positions 109–166 (RSILEAELSNERKALTEAQKMLSQARLAKGGNINHQKINALQSNVLDRQQNIQALQRE) form a coiled coil.

The protein localises to the periplasm. In terms of biological role, required for stabilizing type IV pilus (T4p) in extended, nonretracted conformation on the bacterial cell surface. The polypeptide is Type IV pilus assembly protein C (Neisseria gonorrhoeae (strain ATCC 700825 / FA 1090)).